The sequence spans 559 residues: Forkhead box protein O6 (559 aa).

Disordered regions lie at residues 1–77 (MAAK…VGPL) and 163–183 (SWWM…RRAV). Residues 88–182 (WGNLSYADLI…KTGKTPRRRA (95 aa)) constitute a DNA-binding region (fork-head). S184 is modified (phosphoserine). 2 disordered regions span residues 197–232 (KASK…KWAA) and 534–559 (NFDS…WVPG). Composition is skewed to pro residues over residues 213–222 (DSPPGAPVPG) and 539–553 (LPPP…PPPN).

Post-translationally, phosphorylation of Ser-184 is be important in regulating the transacriptional activity. Expressed in brain in areas of the nucleus accumbens, cingulate cortex, parts of the amygdala and in the hippocampus.

The protein localises to the cytoplasm. The protein resides in the nucleus. Transcriptional activator. In Mus musculus (Mouse), this protein is Forkhead box protein O6 (Foxo6).